Reading from the N-terminus, the 351-residue chain is Increased glyphosate resistance protein (351 aa).

Residues 1 to 18 show a composition bias toward basic and acidic residues; that stretch reads MHREDDSTSTGRREERLS. Residues 1-29 are disordered; that stretch reads MHREDDSTSTGRREERLSTGKGDSLQPGP.

Functionally, confers an increase in glyphosate resistance when expressed in E.coli. This chain is Increased glyphosate resistance protein, found in Pseudomonas sp. (strain PG2982).